We begin with the raw amino-acid sequence, 254 residues long: Putative epimerase LsrE (254 aa).

Residues 14–34 (VALLASYPLSVGILAGQWIAL) form a helical membrane-spanning segment. His-50, Asp-52, and His-81 together coordinate a divalent metal cation. Catalysis depends on Asp-52, which acts as the Proton acceptor. Substrate-binding positions include His-81, 166-169 (GYGS), 199-201 (DGS), and 221-222 (GS). Asp-199 provides a ligand contact to a divalent metal cation. Asp-199 (proton donor) is an active-site residue.

Belongs to the ribulose-phosphate 3-epimerase family. The cofactor is a divalent metal cation.

It localises to the cell membrane. This chain is Putative epimerase LsrE (lsrE), found in Salmonella choleraesuis (strain SC-B67).